Consider the following 342-residue polypeptide: MPVPCGSSCGRNAFMRRPKTGDTLCKECFFLAFETEIHNTIQQEQLFRPGEKVAIAASGGKDSTVLAHVMNLLNKRYNYGLDLVLLSIDEGITGYRDDSLKTVAQNRDDYGMPLRVLSYQELYGWTMDRIVAEIGRSNNCTFCGVFRRQALDRGARLMEVDCVATGHNADDIAETVIMNILRGDTARLRRCCDIKTGSKEADTIPRVKPLKYSYEKEIVMYAHFKKLVYFSTECVFAPNAYRGHARAFLKDLEKVRPSAIMDIIHAGEQLQIKGTVKKPVRGVCGRCGFVSSQQPCKACVLLEGLNRGLPKLGIGKKSKGERMVALQEQQLREKAHLVKNDF.

This sequence belongs to the TtcA family. CTU1/NCS6/ATPBD3 subfamily.

It localises to the cytoplasm. It participates in tRNA modification; 5-methoxycarbonylmethyl-2-thiouridine-tRNA biosynthesis. In terms of biological role, plays a central role in 2-thiolation of mcm(5)S(2)U at tRNA wobble positions of tRNA(Lys), tRNA(Glu) and tRNA(Gln). Directly binds tRNAs and probably acts by catalyzing adenylation of tRNAs, an intermediate required for 2-thiolation. It is unclear whether it acts as a sulfurtransferase that transfers sulfur from thiocarboxylated URM1 onto the uridine of tRNAs at wobble position. In Anopheles gambiae (African malaria mosquito), this protein is Cytoplasmic tRNA 2-thiolation protein 1.